A 1446-amino-acid chain; its full sequence is DNA polymerase III PolC-type (1446 aa).

The 157-residue stretch at 425–581 (YVIFDVETTG…ADAESTGYLL (157 aa)) folds into the Exonuclease domain.

The protein belongs to the DNA polymerase type-C family. PolC subfamily.

The protein resides in the cytoplasm. It catalyses the reaction DNA(n) + a 2'-deoxyribonucleoside 5'-triphosphate = DNA(n+1) + diphosphate. In terms of biological role, required for replicative DNA synthesis. This DNA polymerase also exhibits 3' to 5' exonuclease activity. The sequence is that of DNA polymerase III PolC-type from Latilactobacillus sakei subsp. sakei (strain 23K) (Lactobacillus sakei subsp. sakei).